Reading from the N-terminus, the 505-residue chain is Zinc metalloproteinase/disintegrin (505 aa).

A signal peptide spans 1 to 20 (MIQVLLVIICLAAFPYQGTS). Residues 21 to 214 (IILESGNVND…PIKKASQSNL (194 aa)) constitute a propeptide that is removed on maturation. Repeat copies occupy residues 153 to 179 (KYED…YEPI) and 180 to 206 (KYED…YEPI). Residues 220-416 (RYIELVIVAD…QKPQCILNKP (197 aa)) form the Peptidase M12B domain. The Ca(2+) site is built by Glu-223 and Asp-307. Position 356 (His-356) interacts with Zn(2+). Glu-357 is an active-site residue. Residues His-360 and His-366 each coordinate Zn(2+). Cystine bridges form between Cys-371/Cys-395 and Cys-373/Cys-378. Residues Cys-411 and Asn-414 each contribute to the Ca(2+) site. The propeptide occupies 417–432 (LRTDTVSTPVSGNELL). A Disintegrin domain is found at 424-505 (TPVSGNELLE…AGCPRNPFHA (82 aa)). Cystine bridges form between Cys-438/Cys-453, Cys-440/Cys-448, Cys-447/Cys-470, Cys-461/Cys-467, Cys-466/Cys-491, and Cys-479/Cys-498. A Cell attachment site motif is present at residues 483–485 (RGD).

This sequence belongs to the venom metalloproteinase (M12B) family. P-II subfamily. P-IIa sub-subfamily. As to quaternary structure, monomer. Requires Zn(2+) as cofactor. As to expression, expressed by the venom gland.

The protein localises to the secreted. Impairs hemostasis in the envenomed animal. Its function is as follows. Inhibits platelet aggregation induced by ADP, thrombin, platelet-activating factor and collagen. Acts by inhibiting fibrinogen interaction with platelet receptors GPIIb/GPIIIa (ITGA2B/ITGB3). In Gloydius brevicauda (Korean slamosa snake), this protein is Zinc metalloproteinase/disintegrin.